The chain runs to 580 residues: WD repeat-containing protein 46 (580 aa).

The disordered stretch occupies residues 34-108 (SWKEYKKMKQ…QQEKMKVTKD (75 aa)). 2 stretches are compositionally biased toward basic and acidic residues: residues 64 to 85 (TEGR…HDTG) and 98 to 108 (LQQEKMKVTKD). WD repeat units lie at residues 193-234 (AALD…YTYV), 235-272 (YDNL…NSFL), 274-312 (YVDV…HTNG), 315-354 (SLWS…GLDR), 357-396 (RIWD…NHVQ), and 399-436 (RGMH…IGHA).

As to quaternary structure, part of the small subunit (SSU) processome.

It is found in the nucleus. It localises to the nucleolus. In terms of biological role, scaffold component of the nucleolar structure. Part of the small subunit (SSU) processome, first precursor of the small eukaryotic ribosomal subunit. Required for 18S rRNA processing. Plays a role in negative regulation of detoxification genes by inhibiting protein levels of transcription factor skn-1, leading to down-regulation of skn-1 target genes. This Caenorhabditis elegans protein is WD repeat-containing protein 46.